The primary structure comprises 212 residues: Small ribosomal subunit protein uS3 (212 aa).

The KH type-2 domain occupies 39–108 (IKNYIKERYK…EITISVVEVR (70 aa)).

This sequence belongs to the universal ribosomal protein uS3 family. Part of the 30S ribosomal subunit. Forms a tight complex with proteins S10 and S14.

Its function is as follows. Binds the lower part of the 30S subunit head. Binds mRNA in the 70S ribosome, positioning it for translation. The chain is Small ribosomal subunit protein uS3 from Aquifex aeolicus (strain VF5).